We begin with the raw amino-acid sequence, 170 residues long: Keratin-associated protein 9-2 (170 aa).

17 consecutive repeat copies span residues 8 to 12 (CCQPT), 13 to 17 (CCRTT), 18 to 22 (CCRTT), 37 to 41 (CCQPT), 42 to 46 (CCVSS), 51 to 55 (CCCPT), 61 to 65 (CCRTT), 66 to 70 (CCQPT), 75 to 79 (CYQPS), 80 to 84 (CCSTP), 85 to 89 (CCQPT), 90 to 94 (CCGSS), 95 to 99 (CCGQT), 140 to 144 (CCHPA), 145 to 149 (CCETT), 150 to 154 (CCRTT), and 164 to 168 (CCQPS). The tract at residues 8–168 (CCQPTCCRTT…TCVSSCCQPS (161 aa)) is 17 X 5 AA repeats of C-C-[RQVSGE]-[SPTQ]-[TASP].

The protein belongs to the KRTAP type 9 family. In terms of assembly, interacts with hair keratins.

In terms of biological role, in the hair cortex, hair keratin intermediate filaments are embedded in an interfilamentous matrix, consisting of hair keratin-associated proteins (KRTAP), which are essential for the formation of a rigid and resistant hair shaft through their extensive disulfide bond cross-linking with abundant cysteine residues of hair keratins. The matrix proteins include the high-sulfur and high-glycine-tyrosine keratins. The sequence is that of Keratin-associated protein 9-2 (KRTAP9-2) from Pan troglodytes (Chimpanzee).